Reading from the N-terminus, the 728-residue chain is Putative auxin response factor 20 (728 aa).

A DNA-binding region (TF-B3 1) is located at residues Phe-119 to Pro-233. Low complexity-rich tracts occupy residues Pro-665–Ala-689 and Ala-700–Ser-712. The segment at Pro-665–Gly-728 is disordered.

Belongs to the ARF family. In terms of assembly, homo and heterodimers.

It is found in the nucleus. Auxin response factors (ARFs) are transcriptional factors that bind specifically to the DNA sequence 5'-TGTCTC-3' found in the auxin-responsive promoter elements (AuxREs). The protein is Putative auxin response factor 20 (ARF20) of Oryza sativa subsp. japonica (Rice).